A 287-amino-acid chain; its full sequence is MKFAIVANTERKEAVLLAKELTGWLDSKRVSYVLESLSAEKLGIGPSAKIDDLNRICDIFISLGGDGTLLLASHYSETKPVLGINVGHLGFLTEFNKDEMIGAVEKVLDGSYSIHNRTQLEATTMCNGREQRMCALNDVVIEKGTYPRIPTFVIRLDGELLGSYRADGIIIATSTGSTAYSMSAGGPIIAPKSSVFVITPICPHMLTVRPIVISDDKVIEVSVDAQAGEFPLNCDGRITRMLQPQETVTVKKSNDLINLVANEERDYCEILRTKLLWGREHASSQPE.

The active-site Proton acceptor is D66. NAD(+)-binding positions include D66–G67, N137–D138, R148, R165, D167, and T178–S183.

It belongs to the NAD kinase family. A divalent metal cation is required as a cofactor.

The protein localises to the cytoplasm. It catalyses the reaction NAD(+) + ATP = ADP + NADP(+) + H(+). Its function is as follows. Involved in the regulation of the intracellular balance of NAD and NADP, and is a key enzyme in the biosynthesis of NADP. Catalyzes specifically the phosphorylation on 2'-hydroxyl of the adenosine moiety of NAD to yield NADP. The sequence is that of NAD kinase from Chlorobium limicola (strain DSM 245 / NBRC 103803 / 6330).